We begin with the raw amino-acid sequence, 639 residues long: 3D-(3,5/4)-trihydroxycyclohexane-1,2-dione hydrolase (639 aa).

Glutamate 62 contacts thiamine diphosphate. Positions 438–518 (SLPGDLQRMW…INILLFDNCG (81 aa)) are thiamine pyrophosphate binding. The Mg(2+) site is built by aspartate 489 and asparagine 516.

The protein belongs to the TPP enzyme family. Requires Mg(2+) as cofactor. The cofactor is thiamine diphosphate.

The catalysed reaction is 3D-3,5/4-trihydroxycyclohexane-1,2-dione + H2O = 5-deoxy-D-glucuronate + H(+). It functions in the pathway polyol metabolism; myo-inositol degradation into acetyl-CoA; acetyl-CoA from myo-inositol: step 3/7. Functionally, involved in the cleavage of the C1-C2 bond of 3D-(3,5/4)-trihydroxycyclohexane-1,2-dione (THcHDO) to yield 5-deoxy-glucuronate (5DG). The chain is 3D-(3,5/4)-trihydroxycyclohexane-1,2-dione hydrolase from Clostridium perfringens (strain ATCC 13124 / DSM 756 / JCM 1290 / NCIMB 6125 / NCTC 8237 / Type A).